Here is a 213-residue protein sequence, read N- to C-terminus: Uridine kinase (213 aa).

15-22 lines the ATP pocket; that stretch reads GASASGKS.

It belongs to the uridine kinase family.

Its subcellular location is the cytoplasm. The enzyme catalyses uridine + ATP = UMP + ADP + H(+). The catalysed reaction is cytidine + ATP = CMP + ADP + H(+). The protein operates within pyrimidine metabolism; CTP biosynthesis via salvage pathway; CTP from cytidine: step 1/3. It functions in the pathway pyrimidine metabolism; UMP biosynthesis via salvage pathway; UMP from uridine: step 1/1. The protein is Uridine kinase of Yersinia pseudotuberculosis serotype O:1b (strain IP 31758).